Here is an 85-residue protein sequence, read N- to C-terminus: UPF0386 protein Atu1321 (85 aa).

It belongs to the UPF0386 family.

This chain is UPF0386 protein Atu1321, found in Agrobacterium fabrum (strain C58 / ATCC 33970) (Agrobacterium tumefaciens (strain C58)).